We begin with the raw amino-acid sequence, 197 residues long: Protein GrpE (197 aa).

The interval 1–40 is disordered; it reads MSSKEQKTPEGQAPEEIIMDRHEEIEAVEPEASAEQVDPR.

The protein belongs to the GrpE family. Homodimer.

Its subcellular location is the cytoplasm. In terms of biological role, participates actively in the response to hyperosmotic and heat shock by preventing the aggregation of stress-denatured proteins, in association with DnaK and GrpE. It is the nucleotide exchange factor for DnaK and may function as a thermosensor. Unfolded proteins bind initially to DnaJ; upon interaction with the DnaJ-bound protein, DnaK hydrolyzes its bound ATP, resulting in the formation of a stable complex. GrpE releases ADP from DnaK; ATP binding to DnaK triggers the release of the substrate protein, thus completing the reaction cycle. Several rounds of ATP-dependent interactions between DnaJ, DnaK and GrpE are required for fully efficient folding. The protein is Protein GrpE of Shigella flexneri serotype 5b (strain 8401).